Reading from the N-terminus, the 434-residue chain is Guanosine-inosine kinase (434 aa).

Residues 40 to 45, 93 to 97, and Arg-198 contribute to the GMP site; these read DQTLVD and GTIGN. ATP contacts are provided by residues 284-289, Gly-357, and Asn-402; that span reads TAGPIG.

The protein belongs to the carbohydrate kinase PfkB family. Requires Mg(2+) as cofactor.

The catalysed reaction is guanosine + ATP = GMP + ADP + H(+). The enzyme catalyses inosine + ATP = IMP + ADP + H(+). Its pathway is purine metabolism; IMP biosynthesis via salvage pathway; IMP from inosine: step 1/1. The protein operates within purine metabolism; GMP biosynthesis via salvage pathway. Functionally, catalyzes the phosphorylation of guanosine and inosine to GMP and IMP, respectively. The polypeptide is Guanosine-inosine kinase (Escherichia coli O157:H7).